A 380-amino-acid polypeptide reads, in one-letter code: Cytochrome b (380 aa).

The next 4 membrane-spanning stretches (helical) occupy residues Phe33–Met53, Trp77–Ile98, Trp113–Leu133, and Phe178–Ile198. Heme b is bound by residues His83 and His97. Heme b is bound by residues His182 and His196. His201 lines the a ubiquinone pocket. Transmembrane regions (helical) follow at residues Tyr226–Ser246, Leu288–His308, Phe320–Gly340, and Phe347–Pro367.

The protein belongs to the cytochrome b family. In terms of assembly, the cytochrome bc1 complex contains 3 respiratory subunits (MT-CYB, CYC1 and UQCRFS1), 2 core proteins (UQCRC1 and UQCRC2) and probably 6 low-molecular weight proteins. Heme b is required as a cofactor.

It localises to the mitochondrion inner membrane. In terms of biological role, component of the ubiquinol-cytochrome c reductase complex (complex III or cytochrome b-c1 complex) that is part of the mitochondrial respiratory chain. The b-c1 complex mediates electron transfer from ubiquinol to cytochrome c. Contributes to the generation of a proton gradient across the mitochondrial membrane that is then used for ATP synthesis. This chain is Cytochrome b (mt-cyb), found in Paralichthys olivaceus (Bastard halibut).